We begin with the raw amino-acid sequence, 82 residues long: Small ribosomal subunit protein uS17 (82 aa).

This sequence belongs to the universal ribosomal protein uS17 family. Part of the 30S ribosomal subunit.

In terms of biological role, one of the primary rRNA binding proteins, it binds specifically to the 5'-end of 16S ribosomal RNA. This Synechococcus elongatus (strain ATCC 33912 / PCC 7942 / FACHB-805) (Anacystis nidulans R2) protein is Small ribosomal subunit protein uS17.